Reading from the N-terminus, the 130-residue chain is Small ribosomal subunit protein uS11 (130 aa).

The protein belongs to the universal ribosomal protein uS11 family. Part of the 30S ribosomal subunit.

In terms of biological role, located on the platform of the 30S subunit. The chain is Small ribosomal subunit protein uS11 from Thermoplasma acidophilum (strain ATCC 25905 / DSM 1728 / JCM 9062 / NBRC 15155 / AMRC-C165).